A 505-amino-acid polypeptide reads, in one-letter code: Deoxyguanosinetriphosphate triphosphohydrolase (505 aa).

The HD domain maps to Arg-66–Cys-273.

This sequence belongs to the dGTPase family. Type 1 subfamily. Homotetramer. Requires Mg(2+) as cofactor.

It carries out the reaction dGTP + H2O = 2'-deoxyguanosine + triphosphate + H(+). Functionally, dGTPase preferentially hydrolyzes dGTP over the other canonical NTPs. The protein is Deoxyguanosinetriphosphate triphosphohydrolase of Escherichia coli O139:H28 (strain E24377A / ETEC).